Here is a 514-residue protein sequence, read N- to C-terminus: 2,3-bisphosphoglycerate-independent phosphoglycerate mutase (514 aa).

Positions 14 and 64 each coordinate Mn(2+). Ser-64 serves as the catalytic Phosphoserine intermediate. Substrate is bound by residues His-125, 155–156, Arg-187, Arg-193, 263–266, and Lys-337; these read RD and RADR. Residues Asp-404, His-408, Asp-445, His-446, and His-464 each contribute to the Mn(2+) site.

The protein belongs to the BPG-independent phosphoglycerate mutase family. Monomer. Requires Mn(2+) as cofactor.

It catalyses the reaction (2R)-2-phosphoglycerate = (2R)-3-phosphoglycerate. It participates in carbohydrate degradation; glycolysis; pyruvate from D-glyceraldehyde 3-phosphate: step 3/5. In terms of biological role, catalyzes the interconversion of 2-phosphoglycerate and 3-phosphoglycerate. This Serratia proteamaculans (strain 568) protein is 2,3-bisphosphoglycerate-independent phosphoglycerate mutase.